Here is a 589-residue protein sequence, read N- to C-terminus: Splicing factor U2af large subunit B (589 aa).

The segment at 1 to 195 (MMSYEGNGDG…KRRSGFDMAP (195 aa)) is disordered. A compositionally biased stretch (polar residues) spans 14–27 (STENHNENYISLES). 2 stretches are compositionally biased toward basic and acidic residues: residues 29-100 (PFHE…DRQR) and 109-145 (RDRS…DREV). 2 stretches are compositionally biased toward basic residues: residues 146 to 156 (RHRRRSRSRSR) and 164 to 188 (RSEH…SKRR). RRM domains follow at residues 255–338 (RRVY…RPTD), 375–453 (DRIF…RAIQ), and 494–580 (QVVT…YPED).

Belongs to the splicing factor SR family. As to quaternary structure, component of the spliceosome. Interacts with SF1 in the nucleus.

The protein resides in the nucleus. The protein localises to the nucleus speckle. Necessary for the splicing of pre-mRNA. This is Splicing factor U2af large subunit B from Arabidopsis thaliana (Mouse-ear cress).